We begin with the raw amino-acid sequence, 577 residues long: Phosphatidylinositol/phosphatidylcholine transfer protein SFH14 (577 aa).

The tract at residues 1–22 is disordered; that stretch reads MSGREQTGEKLSDSEYIEEEPR. The region spanning 136–311 is the CRAL-TRIO domain; sequence ELDEVTRHYP…FLGGLCKCPN (176 aa). The interval 364-383 is disordered; it reads ETLKEEPEPEEYYSSTGSRS. Residues 523–550 are a coiled coil; it reads EANEKLLAESLERIKSLELDLDKTKSVL.

It belongs to the SFH family.

The protein resides in the golgi apparatus membrane. Its subcellular location is the cell membrane. Required for transport of secretory proteins from the Golgi complex. Catalyzes the transfer of phosphatidylinositol and phosphatidylcholine between membranes in vitro. This is Phosphatidylinositol/phosphatidylcholine transfer protein SFH14 (SFH14) from Arabidopsis thaliana (Mouse-ear cress).